The sequence spans 301 residues: GTPase Era (301 aa).

Positions 7–175 constitute an Era-type G domain; the sequence is YCGFIAIVGR…AAIVRKHLPE (169 aa). The interval 15–22 is G1; sequence GRPNVGKS. 15–22 is a binding site for GTP; sequence GRPNVGKS. The tract at residues 41–45 is G2; sequence QTTRH. The interval 62–65 is G3; that stretch reads DTPG. Residues 62–66 and 124–127 contribute to the GTP site; these read DTPGL and NKVD. The G4 stretch occupies residues 124-127; it reads NKVD. The segment at 154-156 is G5; sequence ISA. Residues 206–283 form the KH type-2 domain; sequence LGAELPYSVT…HLELWVKVKS (78 aa).

It belongs to the TRAFAC class TrmE-Era-EngA-EngB-Septin-like GTPase superfamily. Era GTPase family. As to quaternary structure, monomer.

It is found in the cytoplasm. The protein resides in the cell inner membrane. Its function is as follows. An essential GTPase that binds both GDP and GTP, with rapid nucleotide exchange. Plays a role in 16S rRNA processing and 30S ribosomal subunit biogenesis and possibly also in cell cycle regulation and energy metabolism. The protein is GTPase Era of Escherichia coli O1:K1 / APEC.